Reading from the N-terminus, the 385-residue chain is MAEGKAMSEFLPFSRPAMGVEELAAVKEVLESGWITTGPKNQALEQAFCQLTGNQHAIAVSSATAGMHITLMALKIGKGDEVITPSLTWVSTLNMISLLGATPVMVDVDRDTLMVTPEAIESAITPRTKAIIPVHYAGAPADIDAIRAIGERYGIAVIEDAAHAVGTYYKGRHIGAKGTAIFSFHAIKNITCAEGGLIVTDNENLARQLRMLKFHGLGVDAYDRQTWGRAPQAEVLTPGYKYNLTDINAAIALTQLVKLEHLNTRRREIAQQYQQALAALPFQPLSLPAWPHVHAWHLFIIRVDEQRCGISRDALMEALKERGIGTGLHFRAAHTQKYYRERFPTLSLPNTEWNSERICSLPLFPDMTTADADHVITALQQLAGQ.

K188 bears the N6-(pyridoxal phosphate)lysine mark.

Belongs to the DegT/DnrJ/EryC1 family. ArnB subfamily. Homodimer. Requires pyridoxal 5'-phosphate as cofactor.

The catalysed reaction is UDP-4-amino-4-deoxy-beta-L-arabinose + 2-oxoglutarate = UDP-beta-L-threo-pentopyranos-4-ulose + L-glutamate. Its pathway is nucleotide-sugar biosynthesis; UDP-4-deoxy-4-formamido-beta-L-arabinose biosynthesis; UDP-4-deoxy-4-formamido-beta-L-arabinose from UDP-alpha-D-glucuronate: step 2/3. It functions in the pathway bacterial outer membrane biogenesis; lipopolysaccharide biosynthesis. In terms of biological role, catalyzes the conversion of UDP-4-keto-arabinose (UDP-Ara4O) to UDP-4-amino-4-deoxy-L-arabinose (UDP-L-Ara4N). The modified arabinose is attached to lipid A and is required for resistance to polymyxin and cationic antimicrobial peptides. The chain is UDP-4-amino-4-deoxy-L-arabinose--oxoglutarate aminotransferase (arnB) from Escherichia coli (strain K12).